The chain runs to 147 residues: DNA-directed RNA polymerase I subunit rpa14 (147 aa).

The disordered stretch occupies residues 71-147; the sequence is VQGPPTEELI…TQGVGEKEQS (77 aa). Low complexity predominate over residues 74–84; sequence PPTEELIIPPE. Residues 87-111 are compositionally biased toward basic and acidic residues; sequence LETKEEESLKHAREENDDLHLDKET. Residues 112 to 124 are compositionally biased toward basic residues; that stretch reads KKRLKKEKKKAAR. The segment covering 125–135 has biased composition (basic and acidic residues); it reads REKEEARKAKA.

Component of the RNA polymerase I (Pol I) complex consisting of 14 subunits. Part of a Pol I subcomplex consisting of the subunits A14 and A43. Interacts with rpa43. Post-translationally, phosphorylated.

Its subcellular location is the nucleus. The protein localises to the nucleolus. DNA-dependent RNA polymerase catalyzes the transcription of DNA into RNA using the four ribonucleoside triphosphates as substrates. Component of RNA polymerase I which synthesizes ribosomal RNA precursors. A14 seems to play a role in the stability of Pol I subunit A43 and association of rrn3 to Pol I. This is DNA-directed RNA polymerase I subunit rpa14 (ker1) from Schizosaccharomyces pombe (strain 972 / ATCC 24843) (Fission yeast).